We begin with the raw amino-acid sequence, 493 residues long: Glutamate--tRNA ligase (493 aa).

Positions 10 to 20 (PSPTGFVHIGS) match the 'HIGH' region motif. The Zn(2+) site is built by Cys114, Cys116, Cys141, and Glu143. The 'KMSKS' region motif lies at 258-262 (KLSKR). Residue Lys261 participates in ATP binding.

The protein belongs to the class-I aminoacyl-tRNA synthetase family. Glutamate--tRNA ligase type 1 subfamily. As to quaternary structure, monomer. Zn(2+) serves as cofactor.

The protein localises to the cytoplasm. It catalyses the reaction tRNA(Glu) + L-glutamate + ATP = L-glutamyl-tRNA(Glu) + AMP + diphosphate. Functionally, catalyzes the attachment of glutamate to tRNA(Glu) in a two-step reaction: glutamate is first activated by ATP to form Glu-AMP and then transferred to the acceptor end of tRNA(Glu). The chain is Glutamate--tRNA ligase from Alkaliphilus metalliredigens (strain QYMF).